The sequence spans 324 residues: Probable 6-phosphogluconolactonase 4, chloroplastic (324 aa).

A chloroplast-targeting transit peptide spans 1–63 (MSVSAAVAAA…PAMATDGAAA (63 aa)). A disordered region spans residues 19-43 (ARHRSPPASRVAATSRGRPFSSGPH).

The protein belongs to the glucosamine/galactosamine-6-phosphate isomerase family. 6-phosphogluconolactonase subfamily.

It is found in the plastid. It localises to the chloroplast. The catalysed reaction is 6-phospho-D-glucono-1,5-lactone + H2O = 6-phospho-D-gluconate + H(+). It participates in carbohydrate degradation; pentose phosphate pathway; D-ribulose 5-phosphate from D-glucose 6-phosphate (oxidative stage): step 2/3. Hydrolysis of 6-phosphogluconolactone to 6-phosphogluconate. This is Probable 6-phosphogluconolactonase 4, chloroplastic from Oryza sativa subsp. japonica (Rice).